A 292-amino-acid chain; its full sequence is 4-hydroxy-tetrahydrodipicolinate synthase (292 aa).

Thr-45 is a binding site for pyruvate. Tyr-133 (proton donor/acceptor) is an active-site residue. Lys-161 serves as the catalytic Schiff-base intermediate with substrate. Ile-203 serves as a coordination point for pyruvate.

It belongs to the DapA family. As to quaternary structure, homotetramer; dimer of dimers.

The protein localises to the cytoplasm. It carries out the reaction L-aspartate 4-semialdehyde + pyruvate = (2S,4S)-4-hydroxy-2,3,4,5-tetrahydrodipicolinate + H2O + H(+). Its pathway is amino-acid biosynthesis; L-lysine biosynthesis via DAP pathway; (S)-tetrahydrodipicolinate from L-aspartate: step 3/4. Functionally, catalyzes the condensation of (S)-aspartate-beta-semialdehyde [(S)-ASA] and pyruvate to 4-hydroxy-tetrahydrodipicolinate (HTPA). The protein is 4-hydroxy-tetrahydrodipicolinate synthase of Cronobacter sakazakii (strain ATCC BAA-894) (Enterobacter sakazakii).